Here is a 552-residue protein sequence, read N- to C-terminus: Probable inorganic phosphate transporter 1-10 (552 aa).

Topologically, residues 1–22 are cytoplasmic; that stretch reads MAPIGVLTALDQARTQYYHFKA. Residues 23-43 form a helical membrane-spanning segment; the sequence is IVIAGMGLFTDSYDLFCIAPV. The Extracellular portion of the chain corresponds to 44 to 68; it reads MKIVGRVYYSDGGARPGVTPPAVVS. The chain crosses the membrane as a helical span at residues 69 to 89; that stretch reads ATVGVALLGAVIGNVVFGALG. Residues 90–96 lie on the Cytoplasmic side of the membrane; that stretch reads DRVGRRR. A helical transmembrane segment spans residues 97-117; sequence VYGACLLLMVCSSVGSGFSVC. The Extracellular portion of the chain corresponds to 118–123; that stretch reads RTRRCA. The helical transmembrane segment at 124–144 threads the bilayer; it reads LASLCFFRFLLGVGVGGDYPL. At 145-158 the chain is on the cytoplasmic side; that stretch reads SATIMSEFANRRTR. Residues 159–179 form a helical membrane-spanning segment; it reads GAFIAAVFSMQGFGILASSAV. The Extracellular portion of the chain corresponds to 180–203; the sequence is TMAVAAAFDHYTGYPAPLDTPECA. A helical transmembrane segment spans residues 204-224; it reads DLAWRIILMAGAVPAALTYYW. Topologically, residues 225–295 are cytoplasmic; that stretch reads RMSMPETARY…RRFVRQHGRD (71 aa). A helical membrane pass occupies residues 296-316; sequence LFACAAAWFLLDIPYYSSTLF. The Extracellular portion of the chain corresponds to 317–342; sequence QSQIYRPLFPAPGLINAFQEAFNVAK. A helical transmembrane segment spans residues 343–363; that stretch reads FQAVIAVASTIPGYFVAVLLI. The Cytoplasmic portion of the chain corresponds to 364–369; the sequence is DRVGRR. A helical transmembrane segment spans residues 370–390; it reads CLQMAGFLLMAVFLFALAGPY. The Extracellular segment spans residues 391–397; it reads DGYWRDH. A helical membrane pass occupies residues 398-418; sequence GAHAGYIVLYSLTFFSANLGP. The Cytoplasmic segment spans residues 419–439; sequence NTTTFILPAELFPARFRSTCH. The helical transmembrane segment at 440 to 460 threads the bilayer; that stretch reads GLSGAAGKLGALVGSIGFLWA. The Extracellular segment spans residues 461–473; it reads SQQKDGAAAGHLP. A helical transmembrane segment spans residues 474 to 494; sequence GIGMMYALFVLGGICLLGLAL. Residues 495–552 lie on the Cytoplasmic side of the membrane; that stretch reads TYVFTPETMMRSLEENESDRAQTQVGDGGSDTEAAKSPASMASSHLSMSPILPARVSV. A disordered region spans residues 507-540; it reads LEENESDRAQTQVGDGGSDTEAAKSPASMASSHL.

It belongs to the major facilitator superfamily. Phosphate:H(+) symporter (TC 2.A.1.9) family. In terms of tissue distribution, expressed at low levels in roots.

Its subcellular location is the membrane. Its function is as follows. High-affinity transporter for external inorganic phosphate. The polypeptide is Probable inorganic phosphate transporter 1-10 (PHT1-10) (Oryza sativa subsp. japonica (Rice)).